The chain runs to 460 residues: Zinc transporter 6 (460 aa).

Over 1-33 (MGTIHLFRKSQRSLVGKLTHEFRLVAADRRSWK) the chain is Cytoplasmic. Residues 34-54 (ILLFGAINLICIGFLLMWCSS) form a helical membrane-spanning segment. The Extracellular segment spans residues 55 to 64 (TNSIALTAYT). The chain crosses the membrane as a helical span at residues 65–85 (YLTIFDLFSLITCLISYWVMV). Over 86–98 (KKPSPVYSFGFER) the chain is Cytoplasmic. The chain crosses the membrane as a helical span at residues 99 to 119 (FEVLAVFASTVLAQLGALFIL). The Extracellular portion of the chain corresponds to 120-134 (KESAERFLEQPEIHT). A helical transmembrane segment spans residues 135–155 (GRLLVGTFVALFFNLFTMLSV). The Cytoplasmic portion of the chain corresponds to 156-200 (RNKPFAYVSEAASTSWLQEHVADLSRSICGIIPGLSSIFLPRMNP). A helical membrane pass occupies residues 201 to 221 (FVLIDIAGALALCITYMLIEI). Over 222-228 (NNYYAVD) the chain is Extracellular. The helical transmembrane segment at 229–249 (TASAIAIALMTFGTMYPMSVY) threads the bilayer. Topologically, residues 250–460 (SGKVLLQTTP…GTNTRGQSRP (211 aa)) are cytoplasmic. Residues 372–392 (PVTSTPAKPSSPPPEFSFNTP) form a disordered region.

The protein belongs to the cation diffusion facilitator (CDF) transporter (TC 2.A.4) family. SLC30A subfamily. In terms of assembly, heterodimer with SLC30A5; form a functional zinc ion transmembrane transporter.

The protein resides in the golgi apparatus. The protein localises to the trans-Golgi network membrane. Its function is as follows. Has probably no intrinsic transporter activity but together with SLC30A5 forms a functional zinc ion:proton antiporter heterodimer, mediating zinc entry into the lumen of organelles along the secretory pathway. As part of that zinc ion:proton antiporter, contributes to zinc ion homeostasis within the early secretory pathway and regulates the activation and folding of enzymes like alkaline phosphatases and enzymes involved in phosphatidylinositol glycan anchor biosynthesis. The polypeptide is Zinc transporter 6 (SLC30A6) (Gallus gallus (Chicken)).